A 2180-amino-acid chain; its full sequence is DNA polymerase epsilon catalytic subunit A (2180 aa).

Zn(2+) contacts are provided by cysteine 2067, cysteine 2070, cysteine 2089, and cysteine 2092. The CysA-type zinc finger occupies 2067-2092 (CENCAYFSDLDICMSDLRSMFKCSKC). [4Fe-4S] cluster contacts are provided by cysteine 2123, cysteine 2126, cysteine 2138, and cysteine 2140. The CysB motif signature appears at 2123-2140 (CAKCRKIKSDTMSAYCTC).

It belongs to the DNA polymerase type-B family. In terms of assembly, heterotetramer. Consists of 4 subunits: POL2, DPB2, DPB3 and DPB4. The cofactor is [4Fe-4S] cluster.

The protein localises to the nucleus. The enzyme catalyses DNA(n) + a 2'-deoxyribonucleoside 5'-triphosphate = DNA(n+1) + diphosphate. Its function is as follows. DNA polymerase II participates in chromosomal DNA replication. In Eremothecium gossypii (strain ATCC 10895 / CBS 109.51 / FGSC 9923 / NRRL Y-1056) (Yeast), this protein is DNA polymerase epsilon catalytic subunit A (POL2).